Here is a 429-residue protein sequence, read N- to C-terminus: Chordin-like protein 2 (429 aa).

An N-terminal signal peptide occupies residues 1-25 (MVPEVRVLSSLLGLALLWFPLDSHA). VWFC domains lie at 31–96 (MFCL…PKCV) and 109–175 (KSCQ…QACK). N-linked (GlcNAc...) asparagine glycosylation is present at asparagine 114. Serine 182 is subject to Phosphoserine; by FAM20C. The segment at 182-224 (SDEEDSVQSLHGVRHPQDPCSSDAGRKRGPGTPAPTGLSAPLS) is disordered. A VWFC 3 domain is found at 250–315 (KACVHGGKTY…VAGKCCKICP (66 aa)).

Interacts with GDF5. May interact with BMP2, BMP4, BMP5, BMP6, BMP7 and INHBA. Phosphorylated by FAM20C in the extracellular medium. As to expression, highly expressed in uterus. Moderately expressed in heart, liver, prostate, testis and ovary. Weakly expressed in skeletal muscle, kidney, spleen, small intestine and colon. Expressed in the secretory epithelial cells of uterine endometrium, fallopian tubes, endocervical glands, bladder and prostate, as well as the transitional epithelium of the urinary bladder, and in bone osteoblasts (at protein level). In normal cartilage, expression was confined in a few chondrocytes in the superficial zone as well as in the middle zone. In diseased cartilage coming from osteoarthritic patients, expression was limited to the middle zone of chondrocytes. Isoform 1 and isoform 2 are expressed in fetal cerebellum and heart, while only isoform 2 is detected in fetal spleen. Isoform 2 present in plasma.

It localises to the secreted. The protein localises to the cytoplasm. In terms of biological role, may inhibit BMPs activity by blocking their interaction with their receptors. Has a negative regulator effect on the cartilage formation/regeneration from immature mesenchymal cells, by preventing or reducing the rate of matrix accumulation. Implicated in tumor angiogenesis. May play a role during myoblast and osteoblast differentiation, and maturation. The sequence is that of Chordin-like protein 2 (CHRDL2) from Homo sapiens (Human).